Reading from the N-terminus, the 342-residue chain is Pre-mRNA-splicing factor 18 (342 aa).

The protein belongs to the PRP18 family. As to quaternary structure, interacts with the spliceosome. Part of a complex containing U4/U6 snRNPs.

Its subcellular location is the nucleus speckle. Its function is as follows. Participates in the second step of pre-mRNA splicing. This Xenopus laevis (African clawed frog) protein is Pre-mRNA-splicing factor 18 (prpf18).